The sequence spans 113 residues: Hydrogenase maturation factor HypA (113 aa).

Residue His2 coordinates Ni(2+). Zn(2+)-binding residues include Cys73, Cys76, Cys89, and Cys92.

This sequence belongs to the HypA/HybF family.

In terms of biological role, involved in the maturation of [NiFe] hydrogenases. Required for nickel insertion into the metal center of the hydrogenase. The protein is Hydrogenase maturation factor HypA of Chlorobium phaeobacteroides (strain BS1).